Here is a 157-residue protein sequence, read N- to C-terminus: 2-C-methyl-D-erythritol 2,4-cyclodiphosphate synthase (157 aa).

Residues D8 and H10 each coordinate a divalent metal cation. 4-CDP-2-C-methyl-D-erythritol 2-phosphate contacts are provided by residues 8–10 (DVH) and 34–35 (HS). H42 lines the a divalent metal cation pocket. Residues 56–58 (DIG), 61–65 (FPDTD), 100–106 (AQAPKMA), 132–135 (TTTE), F139, and R142 contribute to the 4-CDP-2-C-methyl-D-erythritol 2-phosphate site.

This sequence belongs to the IspF family. As to quaternary structure, homotrimer. A divalent metal cation is required as a cofactor.

It catalyses the reaction 4-CDP-2-C-methyl-D-erythritol 2-phosphate = 2-C-methyl-D-erythritol 2,4-cyclic diphosphate + CMP. It participates in isoprenoid biosynthesis; isopentenyl diphosphate biosynthesis via DXP pathway; isopentenyl diphosphate from 1-deoxy-D-xylulose 5-phosphate: step 4/6. Functionally, involved in the biosynthesis of isopentenyl diphosphate (IPP) and dimethylallyl diphosphate (DMAPP), two major building blocks of isoprenoid compounds. Catalyzes the conversion of 4-diphosphocytidyl-2-C-methyl-D-erythritol 2-phosphate (CDP-ME2P) to 2-C-methyl-D-erythritol 2,4-cyclodiphosphate (ME-CPP) with a corresponding release of cytidine 5-monophosphate (CMP). This Pseudomonas putida (strain GB-1) protein is 2-C-methyl-D-erythritol 2,4-cyclodiphosphate synthase.